Here is a 373-residue protein sequence, read N- to C-terminus: Indole glucosinolate O-methyltransferase 2 (373 aa).

Positions 217, 240, 260, 261, and 274 each coordinate S-adenosyl-L-homocysteine. H278 serves as the catalytic Proton acceptor.

The protein belongs to the class I-like SAM-binding methyltransferase superfamily. Cation-independent O-methyltransferase family.

Its pathway is secondary metabolite biosynthesis. In terms of biological role, involved in indole glucosinolate biosynthesis. Catalyzes methoxylation reactions of the glucosinolate indole ring. Converts the hydroxy intermediates 4-hydroxy-indol-3-yl-methylglucosinolate (4OH-I3M) and 1-hydroxy-indol-3-yl-methylglucosinolate (1OH-I3M) to 4-methoxy-indol-3-yl-methylglucosinolate (4MO-I3M) and 1-methoxy-indol-3-yl-methylglucosinolate (1MO-I3M), respectively. This is Indole glucosinolate O-methyltransferase 2 from Arabidopsis thaliana (Mouse-ear cress).